The sequence spans 209 residues: Uracil phosphoribosyltransferase (209 aa).

Residues arginine 79, arginine 104, and aspartate 131–serine 139 each bind 5-phospho-alpha-D-ribose 1-diphosphate. Uracil is bound by residues valine 194 and glycine 199–alanine 201. Aspartate 200 is a binding site for 5-phospho-alpha-D-ribose 1-diphosphate.

Belongs to the UPRTase family. Requires Mg(2+) as cofactor.

It catalyses the reaction UMP + diphosphate = 5-phospho-alpha-D-ribose 1-diphosphate + uracil. The protein operates within pyrimidine metabolism; UMP biosynthesis via salvage pathway; UMP from uracil: step 1/1. Its activity is regulated as follows. Allosterically activated by GTP. Catalyzes the conversion of uracil and 5-phospho-alpha-D-ribose 1-diphosphate (PRPP) to UMP and diphosphate. The sequence is that of Uracil phosphoribosyltransferase from Bacillus mycoides (strain KBAB4) (Bacillus weihenstephanensis).